Here is a 129-residue protein sequence, read N- to C-terminus: Fluoride-specific ion channel FluC 2 (129 aa).

Helical transmembrane passes span leucine 9–leucine 29, glycine 37–isoleucine 57, methionine 74–phenylalanine 94, and tyrosine 100–isoleucine 120. Na(+) is bound by residues glycine 76 and threonine 79.

It belongs to the fluoride channel Fluc/FEX (TC 1.A.43) family.

The protein resides in the cell membrane. It catalyses the reaction fluoride(in) = fluoride(out). Its activity is regulated as follows. Na(+) is not transported, but it plays an essential structural role and its presence is essential for fluoride channel function. Fluoride-specific ion channel. Important for reducing fluoride concentration in the cell, thus reducing its toxicity. This is Fluoride-specific ion channel FluC 2 from Ligilactobacillus salivarius (strain UCC118) (Lactobacillus salivarius).